The sequence spans 353 residues: Quinolinate synthase (353 aa).

Residues His-47 and Ser-68 each contribute to the iminosuccinate site. Cys-113 lines the [4Fe-4S] cluster pocket. Iminosuccinate contacts are provided by residues 139–141 (YAN) and Ser-156. [4Fe-4S] cluster is bound at residue Cys-200. Iminosuccinate contacts are provided by residues 226-228 (HPE) and Thr-243. Cys-297 is a [4Fe-4S] cluster binding site.

This sequence belongs to the quinolinate synthase family. Type 1 subfamily. Requires [4Fe-4S] cluster as cofactor.

It localises to the cytoplasm. The enzyme catalyses iminosuccinate + dihydroxyacetone phosphate = quinolinate + phosphate + 2 H2O + H(+). The protein operates within cofactor biosynthesis; NAD(+) biosynthesis; quinolinate from iminoaspartate: step 1/1. Catalyzes the condensation of iminoaspartate with dihydroxyacetone phosphate to form quinolinate. The protein is Quinolinate synthase of Erwinia tasmaniensis (strain DSM 17950 / CFBP 7177 / CIP 109463 / NCPPB 4357 / Et1/99).